The sequence spans 136 residues: Probable endoribonuclease MazF7 (136 aa).

Positions 115 to 136 (TGPERGEAATHSPVRWTGGRDP) are disordered.

It belongs to the PemK/MazF family. As to quaternary structure, forms a complex with cognate antitoxin MazE7.

Toxic component of a type II toxin-antitoxin (TA) system. Upon expression in E.coli and M.smegmatis inhibits cell growth and colony formation. Its toxic effect is neutralized by coexpression with cognate antitoxin MazE7. Probably an endoribonuclease. The polypeptide is Probable endoribonuclease MazF7 (mazF7) (Mycobacterium tuberculosis (strain ATCC 25618 / H37Rv)).